Here is a 477-residue protein sequence, read N- to C-terminus: MTDNAEILEPQGDHHAWFSLQPFLEAGKWSSTPGTYFKEMKEKNGGAPIYKAHPGLKVITITDHASGKWFFNQPDTVLDRQKGQRFGPLKCKEEYLGKGLPALVTNAMEKHEGARDYIVAVLRERLAATDTTLEHATANFYKDLWANGMGDYTTVYDLFLQQSYAFVLEWIFGMGEEGGQPLPPYKDFLTVNPADLSVLIGLEVDTPVANLVSMVAQAVAGGVSSEEKASIEVLLEAIRSSKMWPSFTKMLEESGLPTQDMDKMFMFFSGFQSSSALAKNMEYCVGSLAANPDFLAELRAELDGQELTIKSVSDAKRFPLLDSFHWEILRLYPAPQFFFKTAQMDLVVPTSSGARYQVRKGDMLCCHHPLIHIDEAVFGADATEFKPKRFIGNPGLKDDVFAYAFPKPSEPGRVGGMPWGCAAHTVGVLDGILKVFYGRWVQEAEWEMKEPPIIDPVEYLGVVGPDGLGFAKVTPRK.

C421 lines the heme pocket.

The protein belongs to the cytochrome P450 family. Requires heme as cofactor.

It carries out the reaction (9S)-hydroperoxy-(10E,12Z)-octadecadienoate = (11S)-hydroxy-(9S,10S)-epoxy-(12Z)-octadecenoate. The enzyme catalyses (13S)-hydroperoxy-(9Z,11E)-octadecadienoate = 11-hydroxy-12,13-epoxy-(9Z)-octadecenoate. Its pathway is lipid metabolism; oxylipin biosynthesis. Cytochrome P450 epoxyalcohol synthase involved in the metabolism of oxylipins 'ectocarpins' natural products, such as hybridalactone, ecklonilactones and derivatives. Isomerizes the hydroperoxides into epoxyalcohols via epoxyallylic radical. Can use linoleic acid 9-hydroperoxide ((9S,10E,12Z)-9-hydroperoxy-10,12-octadecadienoic, 9-HPOD) as preferred substrate to produce (9S,10S,11S,12Z)-9,10-epoxy-11-hydroxy-12-octadecenoic acid and, to a lower extent, active with linoleate 13-hydroperoxide ((9Z,11E,13S)-13-hydroperoxy-9,11-octadecadienoic, 13-HPOD) to produce 11-hydroxy-12,13-epoxy-9-octadecenoic acid. No activity toward alpha-linolenic acid 9- and 13-hydroperoxides, and toward eicosapentaenoic acid 15-hydroperoxide. This is Epoxyalcohol synthase CYP5164B1 from Ectocarpus siliculosus (Brown alga).